Here is a 434-residue protein sequence, read N- to C-terminus: MENSERIKKWKEERAKVAQESRASRLQQKEDERALRQTEKSADAKSHHNPDAGWSATDADSVRRASLVIKERRVQQAKQSLRRLFLYIALPLLVIMLMSWILTSHFYSADATFIVQTDASQDNFSGTSFFGAGNKMSEGFQVREFILSKEMMDRMEKELGFLSYFAQDDIALFSRFHAPLGINDDPYRYYLSKVSVAVDIQQGMLRLNVKARSAKQAEFFAQRILSFAEQHVNTVSARMQKERILWLENDVKSAQENLGAARLELLKIQHIQKDIDPKETITAIYQLIAGFETQLAEAKAEYAQLMVNGLDQNPLIPRLSAKIKVLEKQIGEQRNRLSNKLGSQGSSESLSLFEDLRLQSEIAKARWESALQTLQQGKLQALRERQYLLIISQPMAESDTTRYADGTKWLLFFVLLGITYLVTSLLITIRRMRE.

A compositionally biased stretch (basic and acidic residues) spans 1–50; sequence MENSERIKKWKEERAKVAQESRASRLQQKEDERALRQTEKSADAKSHHNP. The interval 1–58 is disordered; it reads MENSERIKKWKEERAKVAQESRASRLQQKEDERALRQTEKSADAKSHHNPDAGWSATD. The next 2 helical transmembrane spans lie at 84-104 and 409-429; these read LFLYIALPLLVIMLMSWILTS and WLLFFVLLGITYLVTSLLITI.

It belongs to the BexC/CtrB/KpsE family.

It localises to the cell inner membrane. In terms of biological role, may form an ATP-driven capsule polysaccharide export apparatus, in association with the VexA, VexB and VexC proteins. The sequence is that of Vi polysaccharide export inner-membrane protein VexD (vexD) from Salmonella typhi.